The primary structure comprises 194 residues: Ion-translocating oxidoreductase complex subunit B (194 aa).

The tract at residues Met-1 to Ser-26 is hydrophobic. Residues Glu-32–Arg-90 enclose the 4Fe-4S domain. [4Fe-4S] cluster contacts are provided by Cys-49, Cys-52, Cys-57, Cys-73, Cys-116, Cys-119, Cys-122, Cys-126, Cys-146, Cys-149, Cys-152, and Cys-156. 4Fe-4S ferredoxin-type domains are found at residues Lys-107–Lys-136 and Leu-137–Val-166.

It belongs to the 4Fe4S bacterial-type ferredoxin family. RnfB subfamily. In terms of assembly, the complex is composed of six subunits: RnfA, RnfB, RnfC, RnfD, RnfE and RnfG. [4Fe-4S] cluster is required as a cofactor.

The protein localises to the cell inner membrane. In terms of biological role, part of a membrane-bound complex that couples electron transfer with translocation of ions across the membrane. The polypeptide is Ion-translocating oxidoreductase complex subunit B (Alcanivorax borkumensis (strain ATCC 700651 / DSM 11573 / NCIMB 13689 / SK2)).